A 700-amino-acid chain; its full sequence is Beta-galactosidase Bga (700 aa).

Arg-103 is a substrate binding site. Cys-107 contacts Zn(2+). Asn-141 contacts substrate. Catalysis depends on Glu-142, which acts as the Proton donor. Residues Cys-151, Cys-153, and Cys-156 each contribute to the Zn(2+) site. The active-site Nucleophile is Glu-312. Residues Trp-320 and 360–363 (EQYH) each bind substrate. A compositionally biased stretch (acidic residues) spans 648–658 (DPESLAVDDTD). Positions 648–674 (DPESLAVDDTDRDGFDPMADDDKDSSA) are disordered.

It belongs to the glycosyl hydrolase 42 family.

The catalysed reaction is Hydrolysis of terminal non-reducing beta-D-galactose residues in beta-D-galactosides.. With respect to regulation, requires 4 M NaCl or KCl for maximal activity. Cleaves o-nitrophenyl-beta-D-galactopyranoside (ONPG) in vitro. The polypeptide is Beta-galactosidase Bga (Halorubrum lacusprofundi (strain ATCC 49239 / DSM 5036 / JCM 8891 / ACAM 34)).